The sequence spans 333 residues: tRNA N6-adenosine threonylcarbamoyltransferase (333 aa).

2 residues coordinate Fe cation: His-111 and His-115. Residues Val-134 to Gly-138, Asp-167, Gly-180, Asp-184, and Asn-273 contribute to the substrate site. Asp-302 is a Fe cation binding site.

Belongs to the KAE1 / TsaD family. It depends on Fe(2+) as a cofactor.

Its subcellular location is the cytoplasm. It carries out the reaction L-threonylcarbamoyladenylate + adenosine(37) in tRNA = N(6)-L-threonylcarbamoyladenosine(37) in tRNA + AMP + H(+). Required for the formation of a threonylcarbamoyl group on adenosine at position 37 (t(6)A37) in tRNAs that read codons beginning with adenine. Is involved in the transfer of the threonylcarbamoyl moiety of threonylcarbamoyl-AMP (TC-AMP) to the N6 group of A37, together with TsaE and TsaB. TsaD likely plays a direct catalytic role in this reaction. This Anaeromyxobacter sp. (strain Fw109-5) protein is tRNA N6-adenosine threonylcarbamoyltransferase.